The chain runs to 736 residues: Catalase-peroxidase (736 aa).

Positions 100–223 (WHSAGTYRIG…LAAVQMGLIY (124 aa)) form a cross-link, tryptophyl-tyrosyl-methioninium (Trp-Tyr) (with M-249). The active-site Proton acceptor is the His-101. The segment at residues 223-249 (YVNPEGPDGKPDPVAAARDIRETFRRM) is a cross-link (tryptophyl-tyrosyl-methioninium (Tyr-Met) (with W-100)). Residue His-264 coordinates heme b.

The protein belongs to the peroxidase family. Peroxidase/catalase subfamily. As to quaternary structure, homodimer or homotetramer. Heme b serves as cofactor. Post-translationally, formation of the three residue Trp-Tyr-Met cross-link is important for the catalase, but not the peroxidase activity of the enzyme.

It carries out the reaction H2O2 + AH2 = A + 2 H2O. The enzyme catalyses 2 H2O2 = O2 + 2 H2O. Bifunctional enzyme with both catalase and broad-spectrum peroxidase activity. The protein is Catalase-peroxidase of Geobacillus kaustophilus (strain HTA426).